Here is a 308-residue protein sequence, read N- to C-terminus: Methionyl-tRNA formyltransferase (308 aa).

109–112 (SLLP) contacts (6S)-5,6,7,8-tetrahydrofolate.

Belongs to the Fmt family.

The catalysed reaction is L-methionyl-tRNA(fMet) + (6R)-10-formyltetrahydrofolate = N-formyl-L-methionyl-tRNA(fMet) + (6S)-5,6,7,8-tetrahydrofolate + H(+). Functionally, attaches a formyl group to the free amino group of methionyl-tRNA(fMet). The formyl group appears to play a dual role in the initiator identity of N-formylmethionyl-tRNA by promoting its recognition by IF2 and preventing the misappropriation of this tRNA by the elongation apparatus. This chain is Methionyl-tRNA formyltransferase, found in Rhizorhabdus wittichii (strain DSM 6014 / CCUG 31198 / JCM 15750 / NBRC 105917 / EY 4224 / RW1) (Sphingomonas wittichii).